The following is an 891-amino-acid chain: MSISNGWSSSSIISDVLPEEEFEEVEEDELILNENDRLKFRVDELEKIVVAQRNEILLLQSSTVEILRRLQNLEIQDQSRSPTCSGYSSLPRRISGSKSSYTMSPSHAPPRSSHANSKSLYINGMNNNSEEVSPGPPRHRPPTRGSDGMVNVSVGKSARGSPMRKWVSTHDMKDTDRFRRLSTSSEASTSATMNPIVNSVRRLSTTHRQSSPSLLSLCSVISRSPSTSSILRKNNRTCQFSNGSGHLPIFIGGKTVQVPVPTGYENMDPTMDQDPPTMKVTLKHVYSYRGKDVRSNIEMLPTGELVFFSANLVVLMNITGEDRSQRIYHGHTCDVKCITLHPNKILVASGQSSCHSVEKFQKPEHTSPIDSPEDLVRQLEMEHTEAHVRIWDTIKLTTLMVLNGFEKGICHVAFSKTDSGSLLAVVDDSLKHLMSVWNWQKGKREGEVKASNDVVFECKWHPTIRNLIVLYGKGHFSFFNYDPATGVLVKTVATFEGRDKPKTVLSMCFGENDQVVTGDSNGTISIWDPRTCKTTKQAHSVHPGGVYSLTLAKSGKILSGGKDRMVSEWDLQDLVRTRRPIELPDEKGFPRVILQNGSELIIGTSSNTLLFGNIENSTNLTSLIEGDPGNLTFLLTCSSNQLITSSQCGTLRIWNHIDKKVEFSKKFIDSVECVDVDVTNTHIILGFAAGLWIVMNITKQQTIQEKKEGTAPITAVKFAPSGATFAVATKDPHLTIYRIDASKNLLVIARIHHIPAPIVALDFSSDSQYLRGQSIGAHLLFWTKAGEICDGTSVKDVKWGSSRVKIGFETALVAHSSNGQVTAVAQCEDISACGMENGTIRIYKNPVTSVTAGFVELLGHGRIIKSVAFSNKIQLFSCSPTDNSVFEWCLE.

Over residues 77-88 the composition is skewed to polar residues; the sequence is DQSRSPTCSGYS. Positions 77 to 167 are disordered; it reads DQSRSPTCSG…ARGSPMRKWV (91 aa). Low complexity predominate over residues 104 to 117; it reads SPSHAPPRSSHANS. Polar residues predominate over residues 118-131; that stretch reads KSLYINGMNNNSEE. WD repeat units follow at residues 330–401, 404–447, 499–537, 541–579, 626–664, 708–747, 753–792, 816–853, and 859–890; these read GHTC…TLMV, GFEK…REGE, DKPK…TTKQ, VHPG…RTRR, GDPG…VEFS, EGTA…NLLV, HIPA…CDGT, SSNG…VTAG, and GHGR…EWCL.

Belongs to the WD repeat EMAP family.

Its subcellular location is the cytoplasm. It localises to the cytoskeleton. Functionally, may modify the assembly dynamics of microtubules, such that microtubules are slightly longer, but more dynamic. This Caenorhabditis elegans protein is Echinoderm microtubule-associated protein-like elp-1 (elp-1).